The chain runs to 359 residues: Histidinol-phosphate aminotransferase (359 aa).

The residue at position 217 (Lys217) is an N6-(pyridoxal phosphate)lysine.

This sequence belongs to the class-II pyridoxal-phosphate-dependent aminotransferase family. Histidinol-phosphate aminotransferase subfamily. In terms of assembly, homodimer. Pyridoxal 5'-phosphate serves as cofactor.

The catalysed reaction is L-histidinol phosphate + 2-oxoglutarate = 3-(imidazol-4-yl)-2-oxopropyl phosphate + L-glutamate. It participates in amino-acid biosynthesis; L-histidine biosynthesis; L-histidine from 5-phospho-alpha-D-ribose 1-diphosphate: step 7/9. The sequence is that of Histidinol-phosphate aminotransferase from Salmonella enteritidis PT4 (strain P125109).